The sequence spans 406 residues: Cysteine desulfurase (406 aa).

An N6-(pyridoxal phosphate)lysine modification is found at Lys-226. The active-site Cysteine persulfide intermediate is the Cys-364.

This sequence belongs to the class-V pyridoxal-phosphate-dependent aminotransferase family. Csd subfamily. In terms of assembly, homodimer. Interacts with SufE and the SufBCD complex composed of SufB, SufC and SufD. The interaction with SufE is required to mediate the direct transfer of the sulfur atom from the S-sulfanylcysteine. The cofactor is pyridoxal 5'-phosphate.

It localises to the cytoplasm. It catalyses the reaction (sulfur carrier)-H + L-cysteine = (sulfur carrier)-SH + L-alanine. The enzyme catalyses L-selenocysteine + AH2 = hydrogenselenide + L-alanine + A + H(+). It functions in the pathway cofactor biosynthesis; iron-sulfur cluster biosynthesis. Its function is as follows. Cysteine desulfurases mobilize the sulfur from L-cysteine to yield L-alanine, an essential step in sulfur metabolism for biosynthesis of a variety of sulfur-containing biomolecules. Component of the suf operon, which is activated and required under specific conditions such as oxidative stress and iron limitation. Acts as a potent selenocysteine lyase in vitro, that mobilizes selenium from L-selenocysteine. Selenocysteine lyase activity is however unsure in vivo. The protein is Cysteine desulfurase of Klebsiella pneumoniae subsp. pneumoniae (strain ATCC 700721 / MGH 78578).